A 300-amino-acid polypeptide reads, in one-letter code: Small ribosomal subunit protein uS2 (300 aa).

Positions 269–300 are disordered; sequence WEADGADWAASSAAAPAESWAAEAQGAEGAKW.

The protein belongs to the universal ribosomal protein uS2 family. As to quaternary structure, component of the small ribosomal subunit. Mature ribosomes consist of a small (40S) and a large (60S) subunit. The 40S subunit contains about 33 different proteins and 1 molecule of RNA (18S). The 60S subunit contains about 49 different proteins and 3 molecules of RNA (25S, 5.8S and 5S). Interacts with rps21.

It is found in the cytoplasm. Functionally, required for the assembly and/or stability of the 40S ribosomal subunit. Required for the processing of the 20S rRNA-precursor to mature 18S rRNA in a late step of the maturation of 40S ribosomal subunits. This is Small ribosomal subunit protein uS2 (rps0) from Aspergillus terreus (strain NIH 2624 / FGSC A1156).